A 134-amino-acid polypeptide reads, in one-letter code: ATP synthase epsilon chain, chloroplastic (134 aa).

Belongs to the ATPase epsilon chain family. As to quaternary structure, F-type ATPases have 2 components, CF(1) - the catalytic core - and CF(0) - the membrane proton channel. CF(1) has five subunits: alpha(3), beta(3), gamma(1), delta(1), epsilon(1). CF(0) has three main subunits: a, b and c.

It localises to the plastid. The protein localises to the chloroplast thylakoid membrane. In terms of biological role, produces ATP from ADP in the presence of a proton gradient across the membrane. This Phalaenopsis aphrodite subsp. formosana (Moth orchid) protein is ATP synthase epsilon chain, chloroplastic.